The following is a 94-amino-acid chain: Pyrimidine/purine nucleoside phosphorylase (94 aa).

The protein belongs to the nucleoside phosphorylase PpnP family.

The catalysed reaction is a purine D-ribonucleoside + phosphate = a purine nucleobase + alpha-D-ribose 1-phosphate. It carries out the reaction adenosine + phosphate = alpha-D-ribose 1-phosphate + adenine. The enzyme catalyses cytidine + phosphate = cytosine + alpha-D-ribose 1-phosphate. It catalyses the reaction guanosine + phosphate = alpha-D-ribose 1-phosphate + guanine. The catalysed reaction is inosine + phosphate = alpha-D-ribose 1-phosphate + hypoxanthine. It carries out the reaction thymidine + phosphate = 2-deoxy-alpha-D-ribose 1-phosphate + thymine. The enzyme catalyses uridine + phosphate = alpha-D-ribose 1-phosphate + uracil. It catalyses the reaction xanthosine + phosphate = alpha-D-ribose 1-phosphate + xanthine. Its function is as follows. Catalyzes the phosphorolysis of diverse nucleosides, yielding D-ribose 1-phosphate and the respective free bases. Can use uridine, adenosine, guanosine, cytidine, thymidine, inosine and xanthosine as substrates. Also catalyzes the reverse reactions. This Psychromonas ingrahamii (strain DSM 17664 / CCUG 51855 / 37) protein is Pyrimidine/purine nucleoside phosphorylase.